Consider the following 454-residue polypeptide: (Z)-3-hexen-1-ol acetyltransferase (454 aa).

Residues H174 and D389 each act as proton acceptor in the active site.

Belongs to the plant acyltransferase family. In terms of tissue distribution, expressed in leaves and stems. Lower levels in flowers and barely detected in roots and siliques.

The enzyme catalyses (3Z)-hex-3-en-1-ol + acetyl-CoA = (3Z)-hex-3-en-1-yl acetate + CoA. With respect to regulation, inhibited by magnesium, calcium, cobalt, zinc and copper. Its function is as follows. Acyltransferase involved in the production of green leaf volatiles (GLVs). Uses acetyl-CoA as substrate, but not malonyl-CoA or benzoyl-CoA. Prefers primary, medium-chain-length, aliphatic alcohols. In Arabidopsis thaliana (Mouse-ear cress), this protein is (Z)-3-hexen-1-ol acetyltransferase (CHAT).